Reading from the N-terminus, the 414-residue chain is Methanesulfonate monooxygenase hydroxylase subunit alpha (414 aa).

A Rieske domain is found at 44 to 163; the sequence is WVPFRHESEL…CEVKFGGFVW (120 aa). [2Fe-2S] cluster-binding residues include Cys-86, His-88, Cys-115, and His-118. His-225 is a binding site for Fe cation.

The protein belongs to the bacterial ring-hydroxylating dioxygenase alpha subunit family. The MSA monooxygenase system consists of 4 proteins: the 2 subunits of the hydroxylase component (MsmA and MsmB), a ferredoxin (MsmC) and a ferredoxin reductase (MsmD). The hydroxylase component consists of a 3 alpha (MsmA) and 3 beta (MsmB) subunits. The cofactor is [2Fe-2S] cluster. It depends on Fe cation as a cofactor.

It is found in the cytoplasm. The enzyme catalyses methanesulfonate + NADH + O2 = sulfite + formaldehyde + NAD(+) + H2O. Its activity is regulated as follows. MSAMO is inhibited by metal chelators (such as bathophenanthroline, bathocuprione, neocuprione, alpha-alpha-dipyridil and sodium EDTA) and by sodium azide, sodium arsenate and potassium cyanide. Methanesulfonate monooxygenase (MSAMO) mediates the primary degradation of methanesulfonic acid (MSA) to produce formaldehyd and inorganic sulfite by initial hydroxylation of the carbon atom prior to spontaneous cleavage of the unstable hydroxymethanesulfonic acid. MSAMO has a restricted substrate range that includes only the short-chain aliphatic sulfonates (methane- to butanesulfonate) and excludes all larger molecules, such as arylsulfonates and aromatic sulfonates. All MSAMO components are required for enzyme activity. This Methylosulfonomonas methylovora protein is Methanesulfonate monooxygenase hydroxylase subunit alpha.